Here is a 156-residue protein sequence, read N- to C-terminus: MNFSPNTLGSFESCAEVVRSLGCALVDLQWSVSAVSRRVQQAQGRARAVIYSAGGVTLDVCARVHRILVPRLQALGGVRTVFLEVGSPGERVIRNAAEFSIFLGETVKVWFCTGQFQVGTLAFADETCLTLTAGGVPVTIPYVQLTKAQLHPAVRA.

This sequence belongs to the RimP family.

It is found in the cytoplasm. Functionally, required for maturation of 30S ribosomal subunits. The protein is Ribosome maturation factor RimP of Treponema pallidum (strain Nichols).